We begin with the raw amino-acid sequence, 383 residues long: WD repeat-containing protein 55 (383 aa).

Basic and acidic residues predominate over residues 1–11; the sequence is MDRTCEERPAE. The interval 1-33 is disordered; it reads MDRTCEERPAEDGSDEEDPDSMEAPTRIRDTPE. Residues 12-21 are compositionally biased toward acidic residues; that stretch reads DGSDEEDPDS. Serine 14 is subject to Phosphoserine. WD repeat units lie at residues 36–75, 82–121, 125–163, 166–205, 208–247, 250–289, and 293–332; these read VLEAPASGLAFHPARDLLAAGDVDGDVFVFSYSCQEGETK, HHLKACRAVAFSEDGQKLITVSKDKAIHVLDVEQGQLERR, AHGAPINSLLLVDENVLATGDDTGGICLWDQRKEGPLMD, QHEEYIADMALDPAKKLLLTASGDGCLGIFNIKRRRFELL, PQSGDLTSVTLMKWGKKVACGSSEGTIYLFNWNGFGATSD, ALRAESIDCMVPVTESLLCTGSTDGVIRAVNILPNRVVGS, and HTGEPVEELALSHCGRFLASSGHDQRLKFWDMAQLRAVVV. Serine 354 is subject to Phosphoserine. The segment at 363-383 is disordered; the sequence is REEGEDSMAQEEKEETGDDSD. Over residues 365-383 the composition is skewed to acidic residues; that stretch reads EGEDSMAQEEKEETGDDSD. Threonine 378 bears the Phosphothreonine mark. Serine 382 carries the phosphoserine modification.

It belongs to the WD repeat WDR55 family.

The protein localises to the nucleus. The protein resides in the nucleolus. Its subcellular location is the cytoplasm. Nucleolar protein that acts as a modulator of rRNA synthesis. Plays a central role during organogenesis. The sequence is that of WD repeat-containing protein 55 (WDR55) from Homo sapiens (Human).